We begin with the raw amino-acid sequence, 156 residues long: Small ribosomal subunit protein uS7 (156 aa).

Belongs to the universal ribosomal protein uS7 family. Part of the 30S ribosomal subunit. Contacts proteins S9 and S11.

Its function is as follows. One of the primary rRNA binding proteins, it binds directly to 16S rRNA where it nucleates assembly of the head domain of the 30S subunit. Is located at the subunit interface close to the decoding center, probably blocks exit of the E-site tRNA. In Carboxydothermus hydrogenoformans (strain ATCC BAA-161 / DSM 6008 / Z-2901), this protein is Small ribosomal subunit protein uS7.